The sequence spans 61 residues: 14-3-3-like protein (61 aa).

This sequence belongs to the 14-3-3 family.

The chain is 14-3-3-like protein from Zea mays (Maize).